Consider the following 230-residue polypeptide: Cytochrome b6-f complex iron-sulfur subunit, chloroplastic (230 aa).

Positions 1 to 16 (MASTTLSATPTPSQLS) are enriched in low complexity. The segment at 1 to 20 (MASTTLSATPTPSQLSAAKN) is disordered. The N-terminal 56 residues, 1 to 56 (MASTTLSATPTPSQLSAAKNGAYSPSRALLGKTARGLYPEKEMVSRKVTCQATSIP), are a transit peptide targeting the chloroplast. The helical transmembrane segment at 73–93 (LLGALSLPTAGMLIPYGAFFV) threads the bilayer. Residues 116–212 (AAAWLKTHGP…CDISEEGKVV (97 aa)) enclose the Rieske domain. [2Fe-2S] cluster-binding residues include Cys158, His160, Cys176, and His179. A disulfide bridge links Cys163 with Cys178.

Belongs to the Rieske iron-sulfur protein family. The 4 large subunits of the cytochrome b6-f complex are cytochrome b6, subunit IV (17 kDa polypeptide, petD), cytochrome f and the Rieske protein, while the 4 small subunits are petG, petL, petM and petN. The complex functions as a dimer. [2Fe-2S] cluster is required as a cofactor.

It localises to the plastid. It is found in the chloroplast thylakoid membrane. The enzyme catalyses 2 oxidized [plastocyanin] + a plastoquinol + 2 H(+)(in) = 2 reduced [plastocyanin] + a plastoquinone + 4 H(+)(out). In terms of biological role, component of the cytochrome b6-f complex, which mediates electron transfer between photosystem II (PSII) and photosystem I (PSI), cyclic electron flow around PSI, and state transitions. This Fritillaria agrestis (Stinkbells) protein is Cytochrome b6-f complex iron-sulfur subunit, chloroplastic (petC).